The sequence spans 334 residues: MRRMLYAQLPSRALVVVAQLGIADILAEGPADISTLAERTSTDAVALARLLRGLAVFGVFEEGAEQVYSLTPLGEALTSGHPASALPSATLVAGQFGAAWGDLLETVRTGQSPFERSRGVSLFTHMEQDEELRAVFDDSQGRGLALELDEILRAIDFSAYPTVVDVGGSDGTFLRRILSAHPDISGIVFDLPGSTSLQAERPTADPLEGRYSVATGDFFDSLPEGGDLYLLSHILHDWDDDRAVQILRTCRAAMSDDATLMVVDLIAANRGQRDERLHTAALMDLYMLSLFGGNGGQERTAAQVEVLLSKAGFRITRVDSLPSGMNVIRAVRAA.

S-adenosyl-L-methionine-binding positions include D190 and 216–218 (GDF). Residue H236 is the Proton acceptor of the active site.

It belongs to the class I-like SAM-binding methyltransferase superfamily. Cation-independent O-methyltransferase family. COMT subfamily.

It carries out the reaction 5-hydroxy-3-methyl-L-tyrosine + S-adenosyl-L-methionine = 5-hydroxy-3-methyl-O-methyl-L-tyrosine + S-adenosyl-L-homocysteine + H(+). It participates in antibiotic biosynthesis. O-methyltransferase that mediates the methylation of 3-hydroxy-5-methyl-L-tyrosine (3-OH-5-Me-Tyr) into 3-hydroxy-5-methyl-O-methyltyrosine (3-OH-5-Me-OMe-Tyr), a core structure of saframycin A, a potent antitumor antibiotic that belongs to the tetrahydroisoquinoline family. In Streptomyces lavendulae, this protein is O-methyltransferase SfmM3.